Consider the following 214-residue polypeptide: Small ribosomal subunit protein uS5 (214 aa).

The region spanning 54 to 117 (MKYEVIDIGM…RDAKMHVIPV (64 aa)) is the S5 DRBM domain.

It belongs to the universal ribosomal protein uS5 family. Part of the 30S ribosomal subunit. Contacts protein S4.

Functionally, with S4 and S12 plays an important role in translational accuracy. This chain is Small ribosomal subunit protein uS5, found in Metallosphaera sedula (strain ATCC 51363 / DSM 5348 / JCM 9185 / NBRC 15509 / TH2).